A 607-amino-acid chain; its full sequence is 1-deoxy-D-xylulose-5-phosphate synthase (607 aa).

Thiamine diphosphate-binding positions include histidine 63 and 104 to 106 (GHS). Mg(2+) is bound at residue aspartate 135. Residues 136–137 (GA), asparagine 164, tyrosine 271, and glutamate 351 each bind thiamine diphosphate. Asparagine 164 serves as a coordination point for Mg(2+).

This sequence belongs to the transketolase family. DXPS subfamily. As to quaternary structure, homodimer. It depends on Mg(2+) as a cofactor. Requires thiamine diphosphate as cofactor.

The catalysed reaction is D-glyceraldehyde 3-phosphate + pyruvate + H(+) = 1-deoxy-D-xylulose 5-phosphate + CO2. It participates in metabolic intermediate biosynthesis; 1-deoxy-D-xylulose 5-phosphate biosynthesis; 1-deoxy-D-xylulose 5-phosphate from D-glyceraldehyde 3-phosphate and pyruvate: step 1/1. Functionally, catalyzes the acyloin condensation reaction between C atoms 2 and 3 of pyruvate and glyceraldehyde 3-phosphate to yield 1-deoxy-D-xylulose-5-phosphate (DXP). The protein is 1-deoxy-D-xylulose-5-phosphate synthase of Campylobacter hominis (strain ATCC BAA-381 / DSM 21671 / CCUG 45161 / LMG 19568 / NCTC 13146 / CH001A).